The following is a 612-amino-acid chain: Alpha-glycerophosphate oxidase (612 aa).

21–49 (DLLIIGGGITGAGVALQAAASGLDTGLIE) contributes to the FAD binding site. Basic and acidic residues predominate over residues 398 to 408 (VETSTSEKELD). Residues 398-418 (VETSTSEKELDPSAVSRGSSF) are disordered.

The protein belongs to the FAD-dependent glycerol-3-phosphate dehydrogenase family. It depends on FAD as a cofactor.

It localises to the cytoplasm. The catalysed reaction is sn-glycerol 3-phosphate + O2 = dihydroxyacetone phosphate + H2O2. This chain is Alpha-glycerophosphate oxidase (glpO), found in Streptococcus pyogenes serotype M3 (strain ATCC BAA-595 / MGAS315).